A 191-amino-acid polypeptide reads, in one-letter code: Classical arabinogalactan protein 9 (191 aa).

An N-terminal signal peptide occupies residues 1–20; that stretch reads MARSFAIAVICIVLIAGVTG. The interval 20–172 is disordered; sequence GQAPTSPPTA…SPTDVNDQNG (153 aa). A Pyrrolidone carboxylic acid modification is found at Gln21. A 4-hydroxyproline mark is found at Pro23, Pro26, Pro27, Pro31, and Pro33. The span at 24-146 shows a compositional bias: pro residues; the sequence is TSPPTATPAP…PSPSSSPPLP (123 aa). O-linked (Ara...) hydroxyproline glycosylation is found at Pro26, Pro27, Pro31, and Pro33. Residues 155-172 show a composition bias toward polar residues; that stretch reads TDSISPAPSPTDVNDQNG. A lipid anchor (GPI-anchor amidated glycine) is attached at Gly172. The propeptide at 173–191 is removed in mature form; that stretch reads ASKMVSSLVFGSVLVWFMI.

It belongs to the classical AGP family. O-glycosylated on hydroxyprolines; noncontiguous hydroxylproline residues are glycosylated with arabinogalactan. In terms of tissue distribution, predominantly expressed in flowers and at a lower level in leaves and siliques.

It is found in the cell membrane. Functionally, proteoglycan that seems to be implicated in diverse developmental roles such as differentiation, cell-cell recognition, embryogenesis and programmed cell death. This chain is Classical arabinogalactan protein 9 (AGP9), found in Arabidopsis thaliana (Mouse-ear cress).